The sequence spans 407 residues: MLSSSFARNFNILEWQSKEICAKYNVAAGINLVARSPEEAAEAFRKMNLPAAVIKAQVYCGGRGKGHWLETGFKSGVHFVKSADEAAKIAKEMLGHHLVTKQTGKDGLLCQAVMLSDPVEVKRELYFAILLDRQTQSPVVIASTEGGVEIEEVAAHHPEKIHKFVLDGVEGITEEVAKNISTKLGLTGKAYDNGVVEMQKLWKLFVGSDATQVEVNPLAETTDGRIITVDSKFNFDDSAHYRQKQIFGYRDLKQVNPFEIRAEKYGLNYVPLDGNVACLVNGAGLAMATMDVIKLAGGDPANFLDLGGAASEAAVTEGFTIISQQSHVKAILVNIFGGIVRCDMVAAGVIAAFKKVGLKVPLVVRLEGTNVEAGKKLIRESGLPIISADNLTDAGEKAVKAAKGEKF.

Residues 1–9 (MLSSSFARN) constitute a hydrogenosome transit peptide. An ATP-grasp domain is found at 18–261 (KEICAKYNVA…LKQVNPFEIR (244 aa)). Residues Lys-55, 62–64 (GRG), and Glu-124 each bind ATP. 2 residues coordinate Mg(2+): Asn-216 and Asp-230. Residues Asn-281 and 338–340 (GIV) each bind substrate.

The protein belongs to the succinate/malate CoA ligase beta subunit family. In terms of assembly, heterodimer of an alpha and a beta subunit. It depends on Mg(2+) as a cofactor.

Its subcellular location is the hydrogenosome. It catalyses the reaction succinate + ATP + CoA = succinyl-CoA + ADP + phosphate. Its pathway is carbohydrate metabolism; tricarboxylic acid cycle; succinate from succinyl-CoA (ligase route): step 1/1. Functionally, succinyl-CoA synthetase functions in the citric acid cycle (TCA), coupling the hydrolysis of succinyl-CoA to the synthesis of ATP and thus represents the only step of substrate-level phosphorylation in the TCA. The beta subunit provides nucleotide specificity of the enzyme and binds the substrate succinate, while the binding sites for coenzyme A and phosphate are found in the alpha subunit. This is Succinate--CoA ligase [ADP-forming] subunit beta, hydrogenosomal from Trichomonas vaginalis.